The following is a 294-amino-acid chain: Acetyl-coenzyme A carboxylase carboxyl transferase subunit beta (294 aa).

One can recognise a CoA carboxyltransferase N-terminal domain in the interval 30–294 (IMTKCPECKK…PETGGESDGE (265 aa)). Positions 34, 37, 53, and 56 each coordinate Zn(2+). The C4-type zinc finger occupies 34 to 56 (CPECKKIMYTKELQKNLMVCNYC).

Belongs to the AccD/PCCB family. As to quaternary structure, acetyl-CoA carboxylase is a heterohexamer composed of biotin carboxyl carrier protein (AccB), biotin carboxylase (AccC) and two subunits each of ACCase subunit alpha (AccA) and ACCase subunit beta (AccD). It depends on Zn(2+) as a cofactor.

The protein localises to the cytoplasm. It catalyses the reaction N(6)-carboxybiotinyl-L-lysyl-[protein] + acetyl-CoA = N(6)-biotinyl-L-lysyl-[protein] + malonyl-CoA. It participates in lipid metabolism; malonyl-CoA biosynthesis; malonyl-CoA from acetyl-CoA: step 1/1. In terms of biological role, component of the acetyl coenzyme A carboxylase (ACC) complex. Biotin carboxylase (BC) catalyzes the carboxylation of biotin on its carrier protein (BCCP) and then the CO(2) group is transferred by the transcarboxylase to acetyl-CoA to form malonyl-CoA. In Listeria welshimeri serovar 6b (strain ATCC 35897 / DSM 20650 / CCUG 15529 / CIP 8149 / NCTC 11857 / SLCC 5334 / V8), this protein is Acetyl-coenzyme A carboxylase carboxyl transferase subunit beta.